The sequence spans 671 residues: tRNA(Met) cytidine acetyltransferase TmcA (671 aa).

Residues Gln-180, 202-211 (GRGKSALAGQ), and Arg-319 contribute to the ATP site. In terms of domain architecture, N-acetyltransferase spans 356 to 531 (QTLWQSDPET…SGCYTAMALL (176 aa)). Acetyl-CoA contacts are provided by residues 461–463 (IAV), 468–474 (QREGTGR), Glu-499, and Arg-506.

The protein belongs to the RNA cytidine acetyltransferase family. TmcA subfamily.

The protein localises to the cytoplasm. The enzyme catalyses cytidine(34) in elongator tRNA(Met) + acetyl-CoA + ATP + H2O = N(4)-acetylcytidine(34) in elongator tRNA(Met) + ADP + phosphate + CoA + H(+). It carries out the reaction 2-hydroxyisobutanoyl-CoA + L-lysyl-[protein] = N(6)-(2-hydroxyisobutanoyl)-L-lysyl-[protein] + CoA + H(+). With respect to regulation, ATP/GTP hydrolysis is stimulated by the addition of acetyl-CoA and tRNA(Met). Binding of acetyl-CoA to TmcA activates both ATPase and tRNA-binding activities. ATP promotes the 2-hydroxyisobutyryltransferase activity. In terms of biological role, catalyzes the formation of N(4)-acetylcytidine (ac(4)C) at the wobble position of tRNA(Met), by using acetyl-CoA as an acetyl donor and ATP (or GTP). It recognizes the wobble base of tRNA(Met), thus distinguishing between tRNA(Met) and the structurally similar tRNA(Ile2). Could use an RNA helicase motor driven by ATP hydrolysis to deliver the wobble base of tRNA(Met) to the acetyltransferase domain of TmcA. Its function is as follows. Also functions as a lysine 2-hydroxyisobutyryltransferase to regulate transcription. Can specifically catalyze the 2-hydroxyisobutyrylation (Khib) of the DNA-binding protein H-NS. Hydroxyisobutyrylation of H-NS decreases its DNA-binding activity, promotes the expression of acid-resistance genes and enhances bacterial survival under extreme acid stress. The polypeptide is tRNA(Met) cytidine acetyltransferase TmcA (Escherichia coli (strain K12)).